We begin with the raw amino-acid sequence, 242 residues long: Probable transcriptional regulatory protein XCC3027 (242 aa).

It belongs to the TACO1 family.

The protein resides in the cytoplasm. The sequence is that of Probable transcriptional regulatory protein XCC3027 from Xanthomonas campestris pv. campestris (strain ATCC 33913 / DSM 3586 / NCPPB 528 / LMG 568 / P 25).